The sequence spans 181 residues: Oligoribonuclease (181 aa).

The Exonuclease domain occupies 8 to 171 (LIWIDLEMTG…DDIRESVAEL (164 aa)). The active site involves Tyr129.

The protein belongs to the oligoribonuclease family.

The protein resides in the cytoplasm. 3'-to-5' exoribonuclease specific for small oligoribonucleotides. This Sodalis glossinidius (strain morsitans) protein is Oligoribonuclease.